Here is a 239-residue protein sequence, read N- to C-terminus: DUP240 protein DFP3 (239 aa).

The Cytoplasmic portion of the chain corresponds to 1 to 54 (MQPHLDNNSNNDDVKLDTLGEQNVLSSAENITLPEDTFKSYMTYLLYEMAHYKP). Residues 55-75 (MIFSFLALSVSILIVVIFHNV) traverse the membrane as a helical segment. Over 76-79 (KACD) the chain is Extracellular. Residues 80–104 (VVFGFSIFVTSILFLSTLIPFNVYI) form a helical membrane-spanning segment. The Cytoplasmic segment spans residues 105-239 (SDEGFRIKLL…RKQYPDADIP (135 aa)).

Belongs to the DUP/COS family. In terms of assembly, interacts according to large scale protein interaction studies with MEC3 and ULP1.

It is found in the membrane. The polypeptide is DUP240 protein DFP3 (Saccharomyces cerevisiae (strain ATCC 204508 / S288c) (Baker's yeast)).